The sequence spans 176 residues: Adenine phosphoribosyltransferase (176 aa).

The protein belongs to the purine/pyrimidine phosphoribosyltransferase family. Homodimer.

Its subcellular location is the cytoplasm. It catalyses the reaction AMP + diphosphate = 5-phospho-alpha-D-ribose 1-diphosphate + adenine. The protein operates within purine metabolism; AMP biosynthesis via salvage pathway; AMP from adenine: step 1/1. Functionally, catalyzes a salvage reaction resulting in the formation of AMP, that is energically less costly than de novo synthesis. The polypeptide is Adenine phosphoribosyltransferase (Roseobacter denitrificans (strain ATCC 33942 / OCh 114) (Erythrobacter sp. (strain OCh 114))).